The chain runs to 183 residues: Ribosome-recycling factor (183 aa).

Residues 134-156 (DANDELKKHQSEMSQDEVKGHQD) form a disordered region.

The protein belongs to the RRF family.

It localises to the cytoplasm. Functionally, responsible for the release of ribosomes from messenger RNA at the termination of protein biosynthesis. May increase the efficiency of translation by recycling ribosomes from one round of translation to another. The polypeptide is Ribosome-recycling factor (Leptospira biflexa serovar Patoc (strain Patoc 1 / Ames)).